The sequence spans 836 residues: Transcriptional regulatory protein UME6 (836 aa).

Residues Met1–Glu14 are compositionally biased toward basic and acidic residues. 4 disordered regions span residues Met1 to Leu77, Ser92 to His168, His218 to Cys332, and Asn381 to Tyr464. Polar residues-rich tracts occupy residues Ser39–Gln48, Gly61–Leu77, and Ser92–Val112. Phosphoserine is present on Ser114. Over residues Asp117–Asp126 the composition is skewed to basic and acidic residues. Phosphoserine occurs at positions 141, 150, and 228. A compositionally biased stretch (low complexity) spans Ala226–Gly236. Residues Thr258–Met272 are compositionally biased toward polar residues. Positions Ser273 to Gly305 are enriched in low complexity. Residues Ser316 and Ser318 each carry the phosphoserine modification. The segment covering Ser316 to His325 has biased composition (polar residues). Positions Asn381 to Ser398 are enriched in low complexity. The segment covering Arg399–Gln414 has biased composition (polar residues). Residues Pro426–Asn446 show a composition bias toward low complexity. The segment at Asn508–Thr594 is SIN3-binding. A disordered region spans residues Asn636 to Arg766. At Ser645 the chain carries Phosphoserine. Over residues Val670–Asn679 the composition is skewed to polar residues. A compositionally biased stretch (low complexity) spans Ser680–Ala702. Basic residues predominate over residues Ser718–Pro739. The span at Asn740–Ser751 shows a compositional bias: low complexity. A DNA-binding region (zn(2)-C6 fungal-type) is located at residues Cys771–Cys798.

Component of the RPD3C(L) complex composed of at least ASH1, CTI6, DEP1, PHO23, RPD3, RXT2, RXT3, SAP30, SDS3, SIN3, UME1 and UME6. Interacts with RIM11, MCK1 and IME1. Post-translationally, phosphorylated by RIM11 and MCK1.

Its subcellular location is the nucleus. Functionally, component of the RPD3C(L) histone deacetylase complex (HDAC) responsible for the deacetylation of lysine residues on the N-terminal part of the core histones (H2A, H2B, H3 and H4). Histone deacetylation gives a tag for epigenetic repression and plays an important role in transcriptional regulation, cell cycle progression and developmental events. Binds to the URS1 site (5'-AGCCGCCGA-3') and recruits the RPD3 histone deacetylase complex to the promoters to negatively regulate the expression of many genes including CAR1 (arginase), several required for sporulation, mating type switching, inositol metabolism, and oxidative carbon metabolism. Also recruits the ISW2 chromatin remodeling complex to promoters in a second gene repression pathway. Associates with the master regulator of meiosis IME1 in order to activate the expression of meiosis genes. Has both a positive and negative role in regulating phospholipid biosynthesis. This is Transcriptional regulatory protein UME6 (UME6) from Saccharomyces cerevisiae (strain ATCC 204508 / S288c) (Baker's yeast).